Here is a 204-residue protein sequence, read N- to C-terminus: LexA repressor (204 aa).

Residues Arg-28–Lys-48 constitute a DNA-binding region (H-T-H motif). Active-site for autocatalytic cleavage activity residues include Ser-125 and Lys-162.

This sequence belongs to the peptidase S24 family. In terms of assembly, homodimer.

It catalyses the reaction Hydrolysis of Ala-|-Gly bond in repressor LexA.. Its function is as follows. Represses a number of genes involved in the response to DNA damage (SOS response), including recA and lexA. In the presence of single-stranded DNA, RecA interacts with LexA causing an autocatalytic cleavage which disrupts the DNA-binding part of LexA, leading to derepression of the SOS regulon and eventually DNA repair. The polypeptide is LexA repressor (Ectopseudomonas mendocina (strain ymp) (Pseudomonas mendocina)).